The following is a 257-amino-acid chain: Type III pantothenate kinase (257 aa).

7–14 (DIGNSHTV) is an ATP binding site. 106–109 (GTDR) is a substrate binding site. Aspartate 108 serves as the catalytic Proton acceptor. K(+) is bound at residue aspartate 128. ATP is bound at residue threonine 132. Threonine 184 contributes to the substrate binding site.

The protein belongs to the type III pantothenate kinase family. Homodimer. NH4(+) is required as a cofactor. It depends on K(+) as a cofactor.

The protein resides in the cytoplasm. It carries out the reaction (R)-pantothenate + ATP = (R)-4'-phosphopantothenate + ADP + H(+). Its pathway is cofactor biosynthesis; coenzyme A biosynthesis; CoA from (R)-pantothenate: step 1/5. Functionally, catalyzes the phosphorylation of pantothenate (Pan), the first step in CoA biosynthesis. This is Type III pantothenate kinase from Nocardioides sp. (strain ATCC BAA-499 / JS614).